Reading from the N-terminus, the 546-residue chain is Probable protein kinase UbiB (546 aa).

The Protein kinase domain occupies 124–502; it reads DFDIQPLASA…HVRQSQSRYL (379 aa). Residues 130-138 and K153 contribute to the ATP site; that span reads LASASIAQV. D288 acts as the Proton acceptor in catalysis. 2 helical membrane passes run 501–521 and 522–542; these read YLLGIGATLLLSGSFLLVNRP and EWGLMPGWLMVGGVVVWLVGW.

Belongs to the ABC1 family. UbiB subfamily.

Its subcellular location is the cell inner membrane. It functions in the pathway cofactor biosynthesis; ubiquinone biosynthesis [regulation]. In terms of biological role, is probably a protein kinase regulator of UbiI activity which is involved in aerobic coenzyme Q (ubiquinone) biosynthesis. In Salmonella enteritidis PT4 (strain P125109), this protein is Probable protein kinase UbiB.